The following is a 1647-amino-acid chain: Ras GTPase-activating-like protein IQG1 (1647 aa).

Residues 18 to 51 (DTTATTTTTTTSNVLQPSNRLNSPTKFNRKSLDN) are disordered. The segment covering 19–28 (TTATTTTTTT) has biased composition (low complexity). Residues 29–43 (SNVLQPSNRLNSPTK) are compositionally biased toward polar residues. S48 is modified (phosphoserine). Phosphothreonine is present on residues T66, T72, and T82. 3 positions are modified to phosphoserine: S83, S91, and S139. The segment covering 143–162 (FNTQSNVHTPLKQLNQPIGT) has biased composition (polar residues). A disordered region spans residues 143 to 175 (FNTQSNVHTPLKQLNQPIGTPSSSSLSPAKNAS). The span at 163–175 (PSSSSLSPAKNAS) shows a compositional bias: low complexity. Residues S165, S167, and S169 each carry the phosphoserine modification. Positions 184-291 (LCRIEAIKQW…FCLHALSYIL (108 aa)) constitute a Calponin-homology (CH) domain. The interval 326 to 427 (PLPNFSSADT…STSNAKLELH (102 aa)) is disordered. The segment covering 342–355 (TSNNNSSTTSATAA) has biased composition (low complexity). Position 367 is a phosphothreonine (T367). Residues 368-379 (PSPLKRPQQLQK) are compositionally biased toward low complexity. Phosphoserine is present on S369. 2 stretches are compositionally biased toward basic and acidic residues: residues 380-392 (KQLELVEDNKPEL) and 402-413 (ISRDDPFTDRVD). 2 positions are modified to phosphoserine: S433 and S440. IQ domains follow at residues 467-478 (FQSLARGAVFRY), 528-539 (LQSIIRKNFVIN), 556-567 (LQSLIRGKLTRD), 586-597 (FQSLVRMKSIYS), 616-627 (LQSIARSQLYHR), 642-653 (IQSIIRRNAVIE), 672-683 (LQSIARGGVART), 734-745 (VQTLFRGVLSRY), and 764-775 (LQSVARGKLMRG). Positions 841–919 (LSDLKDLIIE…KKIELWQTLF (79 aa)) form a coiled coil. Residues 958–1223 (PVRDSSITYH…DTVKSIISQA (266 aa)) enclose the Ras-GAP domain. 5 positions are modified to phosphoserine: S1064, S1068, S1088, S1383, and S1385.

As to quaternary structure, interacts with myosin MYO1 and its light chain MLC1. Interacts with BNI1. Interacts with BNR1. Interacts with CLB2. Interacts with CLB4. Interacts with CDC28. Post-translationally, hyperphosphorylated. Phosphorylation is cell cycle-dependent and peaks at the time of cytokinesis. Contains 21 consensus sites for cyclin-dependent kinases (CDKs). At least some of them are phosphorylated by the CLB2-CDC28 kinase complex. Mutation of 15 of the phosphorylation sites to Ala caused both premature assembly and delayed disassembly of the actomyosin ring, blocked interaction with the actin-nucleating proteins BNI1 and BNR1, and resulted in defects in cytokinesis.

It localises to the bud neck. Functionally, required for the assembly and the contraction of the actomyosin ring at the bud neck during cytokinesis. In Candida albicans (strain SC5314 / ATCC MYA-2876) (Yeast), this protein is Ras GTPase-activating-like protein IQG1 (IQG1).